Here is a 263-residue protein sequence, read N- to C-terminus: Protein IQ-DOMAIN 9 (263 aa).

The tract at residues 16–41 is disordered; it reads SKQGTEKKKTSAVKPKKGSKKKGTSL. Residues 21–28 carry the Nuclear localization signal 1 motif; the sequence is EKKKTSAV. Residues 25 to 38 are compositionally biased toward basic residues; the sequence is TSAVKPKKGSKKKG. Positions 46–75 constitute an IQ domain; the sequence is EDWAATRIQTAFKAYKARKSLRRLKGIARA. The tract at residues 59–78 is calmodulin-binding; sequence AYKARKSLRRLKGIARAKLS. The short motif at 107 to 114 is the Nuclear localization signal 2 element; sequence ARRVCMVT. Residues 216–263 are disordered; sequence TPKKPKSSKTDSNSPAKRTVSLSSVPAKTPFPGARNTVKPRRLSFPGA. Over residues 226-241 the composition is skewed to polar residues; sequence DSNSPAKRTVSLSSVP.

This sequence belongs to the IQD family. As to quaternary structure, binds to multiple calmodulin (CaM) in the presence of Ca(2+) and CaM-like proteins.

It is found in the nucleus. The protein resides in the nuclear body. Its function is as follows. May be involved in cooperative interactions with calmodulins or calmodulin-like proteins. Recruits calmodulin proteins to microtubules, thus being a potential scaffold in cellular signaling and trafficking. May associate with nucleic acids and regulate gene expression at the transcriptional or post-transcriptional level. In Arabidopsis thaliana (Mouse-ear cress), this protein is Protein IQ-DOMAIN 9.